We begin with the raw amino-acid sequence, 160 residues long: Baculoviral IAP repeat-containing protein 5.1 (160 aa).

Residues 27–97 (RLATFADWPF…KRSASCGFLS (71 aa)) form a BIR repeat. A Phosphothreonine; by CDK1 modification is found at Thr-43. Zn(2+) is bound by residues Cys-66, Cys-69, His-86, and Cys-93.

The protein belongs to the IAP family. Component of the CPC at least composed of survivin/birc5, incenp, cdca8/borealin and/or cdca9/dasra-A, and aurkb/aurora-B. Interacts directly with incenp (via N-terminus), and may weakly interact with aurkb (via N-terminus) to stabilize the complex. Interacts with GTP-bound ran in both the S and M phases of the cell cycle. Also found in a complex with ubiquitin-mediated signaling proteins including at least usp9x/xFAM, nploc4/npl4 and ufd1. Ubiquitination is required for centrosome-targeting.

Its subcellular location is the cytoplasm. It localises to the nucleus. The protein resides in the chromosome. It is found in the centromere. The protein localises to the cytoskeleton. Its subcellular location is the spindle. In terms of biological role, component of the chromosomal passenger complex (CPC), a complex that acts as a key regulator of mitosis. The CPC complex has essential functions at the centromere in ensuring correct chromosome alignment and segregation and is required for chromatin-induced microtubule stabilization and spindle assembly. Stimulates the mitotic kinase activity of aurkb/aurora-B in the CPC. Does not appear to exhibit anti-apoptotic activity. The sequence is that of Baculoviral IAP repeat-containing protein 5.1 (birc5.1) from Xenopus tropicalis (Western clawed frog).